We begin with the raw amino-acid sequence, 323 residues long: tRNA (guanine(9)-N1)-methyltransferase (323 aa).

Over residues 1 to 16 (MTEQTSEATVVNNSPA) the composition is skewed to polar residues. Disordered stretches follow at residues 1-34 (MTEQTSEATVVNNSPAPTIPKIKREKPTPEEIEE) and 192-215 (TGAPNSESKDNDGNSNSNTTNSTD). The segment covering 25–34 (EKPTPEEIEE) has biased composition (basic and acidic residues). Residues 99-319 (KAQPIPSRQI…KVLPPRKIKS (221 aa)) enclose the SAM-dependent MTase TRM10-type domain. The span at 204–215 (GNSNSNTTNSTD) shows a compositional bias: low complexity. S-adenosyl-L-methionine contacts are provided by residues 225–226 (LT), glycine 245, 249–253 (DKNRH), cysteine 257, leucine 271, and 283–285 (HVL). The active-site Proton acceptor is aspartate 249.

Belongs to the class IV-like SAM-binding methyltransferase superfamily. TRM10 family. In terms of assembly, monomer.

The protein resides in the cytoplasm. It is found in the nucleus. It carries out the reaction guanosine(9) in tRNA + S-adenosyl-L-methionine = N(1)-methylguanosine(9) in tRNA + S-adenosyl-L-homocysteine + H(+). S-adenosyl-L-methionine-dependent guanine N(1)-methyltransferase that catalyzes the formation of N(1)-methylguanine at position 9 (m1G9) in cytoplasmic tRNA. This Candida albicans (strain SC5314 / ATCC MYA-2876) (Yeast) protein is tRNA (guanine(9)-N1)-methyltransferase.